We begin with the raw amino-acid sequence, 520 residues long: Putative cytochrome P450 CYP13A5 (520 aa).

Residue Cys464 participates in heme binding.

It belongs to the cytochrome P450 family. The cofactor is heme.

In terms of biological role, cytochromes P450 are a group of heme-thiolate monooxygenases. They oxidize a variety of structurally unrelated compounds, including steroids, fatty acids, and xenobiotics. The polypeptide is Putative cytochrome P450 CYP13A5 (cyp-13A5) (Caenorhabditis elegans).